We begin with the raw amino-acid sequence, 159 residues long: NADH-quinone oxidoreductase subunit B (159 aa).

Positions 36, 37, 102, and 132 each coordinate [4Fe-4S] cluster.

Belongs to the complex I 20 kDa subunit family. As to quaternary structure, NDH-1 is composed of 14 different subunits. Subunits NuoB, C, D, E, F, and G constitute the peripheral sector of the complex. It depends on [4Fe-4S] cluster as a cofactor.

The protein localises to the cell inner membrane. It catalyses the reaction a quinone + NADH + 5 H(+)(in) = a quinol + NAD(+) + 4 H(+)(out). Functionally, NDH-1 shuttles electrons from NADH, via FMN and iron-sulfur (Fe-S) centers, to quinones in the respiratory chain. Couples the redox reaction to proton translocation (for every two electrons transferred, four hydrogen ions are translocated across the cytoplasmic membrane), and thus conserves the redox energy in a proton gradient. The polypeptide is NADH-quinone oxidoreductase subunit B (Delftia acidovorans (strain DSM 14801 / SPH-1)).